Here is a 211-residue protein sequence, read N- to C-terminus: Large ribosomal subunit protein uL3 (211 aa).

This sequence belongs to the universal ribosomal protein uL3 family. As to quaternary structure, part of the 50S ribosomal subunit. Forms a cluster with proteins L14 and L19.

One of the primary rRNA binding proteins, it binds directly near the 3'-end of the 23S rRNA, where it nucleates assembly of the 50S subunit. The polypeptide is Large ribosomal subunit protein uL3 (Desulfatibacillum aliphaticivorans).